We begin with the raw amino-acid sequence, 569 residues long: Sulfite reductase [NADPH] hemoprotein beta-component (569 aa).

Positions 433, 439, 478, and 482 each coordinate [4Fe-4S] cluster. Siroheme is bound at residue cysteine 482.

The protein belongs to the nitrite and sulfite reductase 4Fe-4S domain family. Alpha(8)-beta(8). The alpha component is a flavoprotein, the beta component is a hemoprotein. It depends on siroheme as a cofactor. Requires [4Fe-4S] cluster as cofactor.

It carries out the reaction hydrogen sulfide + 3 NADP(+) + 3 H2O = sulfite + 3 NADPH + 4 H(+). It functions in the pathway sulfur metabolism; hydrogen sulfide biosynthesis; hydrogen sulfide from sulfite (NADPH route): step 1/1. Component of the sulfite reductase complex that catalyzes the 6-electron reduction of sulfite to sulfide. This is one of several activities required for the biosynthesis of L-cysteine from sulfate. The sequence is that of Sulfite reductase [NADPH] hemoprotein beta-component from Shewanella sediminis (strain HAW-EB3).